The following is a 98-amino-acid chain: NADH-ubiquinone oxidoreductase chain 4L (98 aa).

The next 3 helical transmembrane spans lie at 2-22, 30-50, and 61-81; these read PFIY…LLLF, LLCL…TTLG, and IILM…LVTI.

The protein belongs to the complex I subunit 4L family. Core subunit of respiratory chain NADH dehydrogenase (Complex I) which is composed of 45 different subunits.

Its subcellular location is the mitochondrion inner membrane. The enzyme catalyses a ubiquinone + NADH + 5 H(+)(in) = a ubiquinol + NAD(+) + 4 H(+)(out). In terms of biological role, core subunit of the mitochondrial membrane respiratory chain NADH dehydrogenase (Complex I) which catalyzes electron transfer from NADH through the respiratory chain, using ubiquinone as an electron acceptor. Part of the enzyme membrane arm which is embedded in the lipid bilayer and involved in proton translocation. The polypeptide is NADH-ubiquinone oxidoreductase chain 4L (MT-ND4L) (Bradypus tridactylus (Pale-throated three-toed sloth)).